We begin with the raw amino-acid sequence, 366 residues long: Anhydro-N-acetylmuramic acid kinase (366 aa).

10-17 contacts ATP; sequence GTSMDGID.

Belongs to the anhydro-N-acetylmuramic acid kinase family.

It carries out the reaction 1,6-anhydro-N-acetyl-beta-muramate + ATP + H2O = N-acetyl-D-muramate 6-phosphate + ADP + H(+). It participates in amino-sugar metabolism; 1,6-anhydro-N-acetylmuramate degradation. Its pathway is cell wall biogenesis; peptidoglycan recycling. Catalyzes the specific phosphorylation of 1,6-anhydro-N-acetylmuramic acid (anhMurNAc) with the simultaneous cleavage of the 1,6-anhydro ring, generating MurNAc-6-P. Is required for the utilization of anhMurNAc either imported from the medium or derived from its own cell wall murein, and thus plays a role in cell wall recycling. The chain is Anhydro-N-acetylmuramic acid kinase from Legionella pneumophila (strain Corby).